A 61-amino-acid chain; its full sequence is Small ribosomal subunit protein uS14 (61 aa).

The Zn(2+) site is built by cysteine 24, cysteine 27, cysteine 40, and cysteine 43.

The protein belongs to the universal ribosomal protein uS14 family. Zinc-binding uS14 subfamily. As to quaternary structure, part of the 30S ribosomal subunit. Contacts proteins S3 and S10. Requires Zn(2+) as cofactor.

Functionally, binds 16S rRNA, required for the assembly of 30S particles and may also be responsible for determining the conformation of the 16S rRNA at the A site. The protein is Small ribosomal subunit protein uS14 of Halalkalibacterium halodurans (strain ATCC BAA-125 / DSM 18197 / FERM 7344 / JCM 9153 / C-125) (Bacillus halodurans).